Here is a 143-residue protein sequence, read N- to C-terminus: AP-2 complex subunit sigma (143 aa).

The protein belongs to the adaptor complexes small subunit family. Adaptor protein complex 2 (AP-2) is a heterotetramer composed of two large adaptins (alpha-type subunit APL3 and beta-type subunit APL1), a medium chain (mu-type subunit APM4) and a small adaptin (sigma-type subunit APS2).

The protein localises to the cell membrane. It localises to the membrane. Its subcellular location is the coated pit. In terms of biological role, component of the adaptor complexes which link clathrin to receptors in coated vesicles. Clathrin-associated protein complexes are believed to interact with the cytoplasmic tails of membrane proteins, leading to their selection and concentration. This chain is AP-2 complex subunit sigma (APS2), found in Gibberella zeae (strain ATCC MYA-4620 / CBS 123657 / FGSC 9075 / NRRL 31084 / PH-1) (Wheat head blight fungus).